Here is a 71-residue protein sequence, read N- to C-terminus: NAD(P)H-quinone oxidoreductase subunit O (71 aa).

It belongs to the complex I NdhO subunit family. As to quaternary structure, NDH-1 can be composed of about 15 different subunits; different subcomplexes with different compositions have been identified which probably have different functions.

The protein resides in the cellular thylakoid membrane. It catalyses the reaction a plastoquinone + NADH + (n+1) H(+)(in) = a plastoquinol + NAD(+) + n H(+)(out). The enzyme catalyses a plastoquinone + NADPH + (n+1) H(+)(in) = a plastoquinol + NADP(+) + n H(+)(out). NDH-1 shuttles electrons from an unknown electron donor, via FMN and iron-sulfur (Fe-S) centers, to quinones in the respiratory and/or the photosynthetic chain. The immediate electron acceptor for the enzyme in this species is believed to be plastoquinone. Couples the redox reaction to proton translocation, and thus conserves the redox energy in a proton gradient. Cyanobacterial NDH-1 also plays a role in inorganic carbon-concentration. This Nostoc punctiforme (strain ATCC 29133 / PCC 73102) protein is NAD(P)H-quinone oxidoreductase subunit O.